A 120-amino-acid chain; its full sequence is NAD(P)H-quinone oxidoreductase subunit 3, chloroplastic (120 aa).

The next 3 membrane-spanning stretches (helical) occupy residues 9-29 (IFWA…FISG), 64-84 (MFAL…PWAM), and 88-108 (VLGL…IVGL).

This sequence belongs to the complex I subunit 3 family. NDH is composed of at least 16 different subunits, 5 of which are encoded in the nucleus.

The protein localises to the plastid. Its subcellular location is the chloroplast thylakoid membrane. It carries out the reaction a plastoquinone + NADH + (n+1) H(+)(in) = a plastoquinol + NAD(+) + n H(+)(out). The enzyme catalyses a plastoquinone + NADPH + (n+1) H(+)(in) = a plastoquinol + NADP(+) + n H(+)(out). Functionally, NDH shuttles electrons from NAD(P)H:plastoquinone, via FMN and iron-sulfur (Fe-S) centers, to quinones in the photosynthetic chain and possibly in a chloroplast respiratory chain. The immediate electron acceptor for the enzyme in this species is believed to be plastoquinone. Couples the redox reaction to proton translocation, and thus conserves the redox energy in a proton gradient. The sequence is that of NAD(P)H-quinone oxidoreductase subunit 3, chloroplastic from Jasminum nudiflorum (Winter jasmine).